A 419-amino-acid chain; its full sequence is Adenylosuccinate synthetase (419 aa).

GTP is bound by residues glycine 11–lysine 17 and glycine 39–serine 41. Residue aspartate 12 is the Proton acceptor of the active site. Aspartate 12 and glycine 39 together coordinate Mg(2+). IMP is bound by residues aspartate 12–lysine 15, asparagine 37–histidine 40, threonine 129, arginine 143, asparagine 221, threonine 236, and arginine 296. The active-site Proton donor is the histidine 40. Residue valine 292 to arginine 298 coordinates substrate. GTP is bound by residues arginine 298, lysine 324–aspartate 326, and glycine 408–glycine 410.

Belongs to the adenylosuccinate synthetase family. In terms of assembly, homodimer. It depends on Mg(2+) as a cofactor.

It localises to the cytoplasm. It catalyses the reaction IMP + L-aspartate + GTP = N(6)-(1,2-dicarboxyethyl)-AMP + GDP + phosphate + 2 H(+). It functions in the pathway purine metabolism; AMP biosynthesis via de novo pathway; AMP from IMP: step 1/2. Plays an important role in the de novo pathway and in the salvage pathway of purine nucleotide biosynthesis. Catalyzes the first committed step in the biosynthesis of AMP from IMP. This Chaetomium globosum (strain ATCC 6205 / CBS 148.51 / DSM 1962 / NBRC 6347 / NRRL 1970) (Soil fungus) protein is Adenylosuccinate synthetase.